A 199-amino-acid chain; its full sequence is Peroxiredoxin-1 (199 aa).

Serine 2 bears the N-acetylserine mark. Positions 6-165 (AKIGHPAPNF…TLRLVQAFQF (160 aa)) constitute a Thioredoxin domain. Residue lysine 7 is modified to N6-acetyllysine; alternate. Lysine 7 is covalently cross-linked (Glycyl lysine isopeptide (Lys-Gly) (interchain with G-Cter in SUMO2); alternate). 2 positions are modified to N6-acetyllysine: lysine 16 and lysine 27. Position 32 is a phosphoserine (serine 32). Residue lysine 35 is modified to N6-acetyllysine; alternate. An N6-succinyllysine; alternate modification is found at lysine 35. Cysteine 52 acts as the Cysteine sulfenic acid (-SOH) intermediate in catalysis. Residue threonine 90 is modified to Phosphothreonine; by CDK1. Residue lysine 120 forms a Glycyl lysine isopeptide (Lys-Gly) (interchain with G-Cter in SUMO2) linkage. Lysine 136 is modified (N6-acetyllysine). Residues 176-199 (GWKPGSDTIKPDVQKSKEYFSKQK) form a disordered region. Basic and acidic residues predominate over residues 184 to 199 (IKPDVQKSKEYFSKQK). Lysine 185 is covalently cross-linked (Glycyl lysine isopeptide (Lys-Gly) (interchain with G-Cter in SUMO1)). Lysine 197 is subject to N6-acetyllysine.

Belongs to the peroxiredoxin family. AhpC/Prx1 subfamily. Homodimer; disulfide-linked, upon oxidation. 5 homodimers assemble to form a ring-like decamer. Interacts with GDPD5; forms a mixed-disulfide with GDPD5. Interacts with SESN1 and SESN2. Interacts with FAM107A. In terms of processing, phosphorylated on Thr-90 during the M-phase, which leads to a more than 80% decrease in enzymatic activity. Post-translationally, acetylation increases reducing activity and resistance to superoxidation. Deacetylated by HDAC6 which decreases reducing activity. The enzyme can be inactivated by further oxidation of the cysteine sulfenic acid (C(P)-SOH) to sulphinic acid (C(P)-SO2H) instead of its condensation to a disulfide bond. It can be reactivated by forming a transient disulfide bond with sulfiredoxin SRXN1, which reduces the cysteine sulfinic acid in an ATP- and Mg-dependent manner.

Its subcellular location is the cytoplasm. It is found in the melanosome. The catalysed reaction is a hydroperoxide + [thioredoxin]-dithiol = an alcohol + [thioredoxin]-disulfide + H2O. Functionally, thiol-specific peroxidase that catalyzes the reduction of hydrogen peroxide and organic hydroperoxides to water and alcohols, respectively. Plays a role in cell protection against oxidative stress by detoxifying peroxides and as sensor of hydrogen peroxide-mediated signaling events. Might participate in the signaling cascades of growth factors and tumor necrosis factor-alpha by regulating the intracellular concentrations of H(2)O(2). Reduces an intramolecular disulfide bond in GDPD5 that gates the ability to GDPD5 to drive postmitotic motor neuron differentiation. This is Peroxiredoxin-1 (PRDX1) from Homo sapiens (Human).